A 161-amino-acid chain; its full sequence is Assembly protein P7 (161 aa).

In terms of assembly, homodimer. Part of the packaging complex composed of RDRP, P4 and P7. Interacts with RDRP.

Its subcellular location is the virion. In terms of biological role, assembly protein part of the packaging complex that packages the viral RNA segments, replicate them into a double-stranded form and transcribe them. Required for efficient procapsid assembly. Necessary for stable packaging. May stabilize the RNA-dependent RNA polymerase (RdRP) in its position at the three-fold axis on the inner side of empty-unexpanded procapsids. Could play a role in viral RNA recognition. Seems to be involved in the regulation of plus strand synthesis (transcription) as a fidelity factor. The protein is Assembly protein P7 (P7) of Pseudomonas phage phi6 (Bacteriophage phi-6).